The following is a 401-amino-acid chain: 4-hydroxy-3-methylbut-2-enyl diphosphate reductase (401 aa).

Cys-66 contacts [4Fe-4S] cluster. Residue His-96 participates in (2E)-4-hydroxy-3-methylbut-2-enyl diphosphate binding. Residue His-96 participates in dimethylallyl diphosphate binding. His-96 is an isopentenyl diphosphate binding site. Cys-157 provides a ligand contact to [4Fe-4S] cluster. (2E)-4-hydroxy-3-methylbut-2-enyl diphosphate is bound at residue His-185. His-185 is a binding site for dimethylallyl diphosphate. Position 185 (His-185) interacts with isopentenyl diphosphate. Glu-187 (proton donor) is an active-site residue. Thr-250 contacts (2E)-4-hydroxy-3-methylbut-2-enyl diphosphate. Cys-288 is a [4Fe-4S] cluster binding site. (2E)-4-hydroxy-3-methylbut-2-enyl diphosphate is bound by residues Ser-317, Ser-318, Asn-319, and Ser-379. Dimethylallyl diphosphate is bound by residues Ser-317, Ser-318, Asn-319, and Ser-379. 4 residues coordinate isopentenyl diphosphate: Ser-317, Ser-318, Asn-319, and Ser-379.

It belongs to the IspH family. The cofactor is [4Fe-4S] cluster.

It carries out the reaction isopentenyl diphosphate + 2 oxidized [2Fe-2S]-[ferredoxin] + H2O = (2E)-4-hydroxy-3-methylbut-2-enyl diphosphate + 2 reduced [2Fe-2S]-[ferredoxin] + 2 H(+). It catalyses the reaction dimethylallyl diphosphate + 2 oxidized [2Fe-2S]-[ferredoxin] + H2O = (2E)-4-hydroxy-3-methylbut-2-enyl diphosphate + 2 reduced [2Fe-2S]-[ferredoxin] + 2 H(+). It participates in isoprenoid biosynthesis; dimethylallyl diphosphate biosynthesis; dimethylallyl diphosphate from (2E)-4-hydroxy-3-methylbutenyl diphosphate: step 1/1. It functions in the pathway isoprenoid biosynthesis; isopentenyl diphosphate biosynthesis via DXP pathway; isopentenyl diphosphate from 1-deoxy-D-xylulose 5-phosphate: step 6/6. Functionally, catalyzes the conversion of 1-hydroxy-2-methyl-2-(E)-butenyl 4-diphosphate (HMBPP) into a mixture of isopentenyl diphosphate (IPP) and dimethylallyl diphosphate (DMAPP). Acts in the terminal step of the DOXP/MEP pathway for isoprenoid precursor biosynthesis. In Trichodesmium erythraeum (strain IMS101), this protein is 4-hydroxy-3-methylbut-2-enyl diphosphate reductase.